Here is a 144-residue protein sequence, read N- to C-terminus: YECGPLQRLKVKRQWAEAYGSGNDREEFGHFIWTHVFKDAPSARDLFKRVRGDNIHTPAFRAHATRVLGGLDMCIALLDDEGVLNTQLAHLASQHSSRGVSAAQYDVVEHSVMMGVEHEIGQNVFDKDAWQACLDVITGGIQGN.

A Globin domain is found at 2–144 (ECGPLQRLKV…DVITGGIQGN (143 aa)). Histidine 95 is a binding site for heme b.

It belongs to the globin family. As to quaternary structure, giant hemoglobin is composed of four heme-containing chains (AI to AIV), and two linker chains (AV and AVI).

This chain is Giant hemoglobin AIII chain, found in Lamellibrachia sp. (Deep-sea giant tube worm).